A 647-amino-acid polypeptide reads, in one-letter code: UvrABC system protein C (647 aa).

Residues 16–95 form the GIY-YIG domain; the sequence is VEPGVYRFRD…IKEFDPRFNV (80 aa). The UVR domain maps to 208–243; the sequence is DRFARELEQQMNAAAAELDFERAARLRDDLGALKRA.

Belongs to the UvrC family. In terms of assembly, interacts with UvrB in an incision complex.

It is found in the cytoplasm. The UvrABC repair system catalyzes the recognition and processing of DNA lesions. UvrC both incises the 5' and 3' sides of the lesion. The N-terminal half is responsible for the 3' incision and the C-terminal half is responsible for the 5' incision. This chain is UvrABC system protein C, found in Mycolicibacterium paratuberculosis (strain ATCC BAA-968 / K-10) (Mycobacterium paratuberculosis).